A 524-amino-acid polypeptide reads, in one-letter code: MAEQQLGVLKALDVAKTQLYHFTAIVIAGMGFFTDAYDLFCVSLVTKLLGRIYYFNPESAKPGSLPPHVAAAVNGVALCGTLSGQLFFGWLGDKLGRKKVYGLTLIMMILCSVASGLSFGNEAKGVMTTLCFFRFWLGFGIGGDYPLSATIMSEYANKKTRGAFIAAVFAMQGVGILAGGFVALAVSSIFDKKFPAPTYAVNRALSTPPQVDYIWRIIVMFGALPAALTYYWRMKMPETARYTALVAKNIKQATADMSKVLQTDIELEERVEDDVKDPRQNYGLFSKEFLRRHGLHLLGTTSTWFLLDIAFYSQNLFQKDIFSAIGWIPKAATMNATHEVFRIARAQTLIALCSTVPGYWFTVAFIDTIGRFKIQLNGFFMMTVFMFAIAFPYNHWIKPENRIGFVVMYSLTFFFANFGPNATTFIVPAEIFPARLRSTCHGISAAAGKAGAIIGAFGFLYAAQNQDKAKVDAGYPPGIGVKNSLIVLGVLNFIGMLFTFLVPEPKGKSLEELSGEAEVSHDEK.

The Cytoplasmic portion of the chain corresponds to 1 to 24 (MAEQQLGVLKALDVAKTQLYHFTA). Residues 25–45 (IVIAGMGFFTDAYDLFCVSLV) form a helical membrane-spanning segment. At 46–70 (TKLLGRIYYFNPESAKPGSLPPHVA) the chain is on the extracellular side. The helical transmembrane segment at 71–91 (AAVNGVALCGTLSGQLFFGWL) threads the bilayer. Topologically, residues 92–99 (GDKLGRKK) are cytoplasmic. A helical membrane pass occupies residues 100 to 120 (VYGLTLIMMILCSVASGLSFG). The Extracellular portion of the chain corresponds to 121 to 131 (NEAKGVMTTLC). The chain crosses the membrane as a helical span at residues 132–152 (FFRFWLGFGIGGDYPLSATIM). Topologically, residues 153–161 (SEYANKKTR) are cytoplasmic. A helical transmembrane segment spans residues 162–182 (GAFIAAVFAMQGVGILAGGFV). Over 183 to 211 (ALAVSSIFDKKFPAPTYAVNRALSTPPQV) the chain is Extracellular. A helical membrane pass occupies residues 212–232 (DYIWRIIVMFGALPAALTYYW). Residues 233–292 (RMKMPETARYTALVAKNIKQATADMSKVLQTDIELEERVEDDVKDPRQNYGLFSKEFLRR) lie on the Cytoplasmic side of the membrane. The chain crosses the membrane as a helical span at residues 293–313 (HGLHLLGTTSTWFLLDIAFYS). Residues 314–348 (QNLFQKDIFSAIGWIPKAATMNATHEVFRIARAQT) are Extracellular-facing. Residues 349 to 369 (LIALCSTVPGYWFTVAFIDTI) form a helical membrane-spanning segment. At 370–371 (GR) the chain is on the cytoplasmic side. Residues 372-392 (FKIQLNGFFMMTVFMFAIAFP) traverse the membrane as a helical segment. The Extracellular segment spans residues 393 to 402 (YNHWIKPENR). A helical membrane pass occupies residues 403–423 (IGFVVMYSLTFFFANFGPNAT). Topologically, residues 424–441 (TFIVPAEIFPARLRSTCH) are cytoplasmic. The helical transmembrane segment at 442–462 (GISAAAGKAGAIIGAFGFLYA) threads the bilayer. Residues 463-484 (AQNQDKAKVDAGYPPGIGVKNS) lie on the Extracellular side of the membrane. A helical membrane pass occupies residues 485–505 (LIVLGVLNFIGMLFTFLVPEP). At 506–524 (KGKSLEELSGEAEVSHDEK) the chain is on the cytoplasmic side.

Belongs to the major facilitator superfamily. Phosphate:H(+) symporter (TC 2.A.1.9) family. As to expression, root specific, especially in trichoblasts. In mature plants, localized in root cortical cells and young lateral roots.

It is found in the membrane. Functionally, high-affinity transporter for external inorganic phosphate. This chain is Probable inorganic phosphate transporter 1-2 (PHT1-2), found in Arabidopsis thaliana (Mouse-ear cress).